Consider the following 142-residue polypeptide: MSYMLPHLHNGWQVDQAILSEEDRVVVIRFGHDWDPTCMKMDEVLYSIAEKVKNFAVIYLVDITEVPDFNKMYELYDPCTVMFFFRNKHIMIDLGTGNNNKINWAMEDKQEMVDIIETVYRGARKGRGLVVSPKDYSTKYRY.

A disulfide bridge connects residues cysteine 38 and cysteine 79. A Phosphoserine modification is found at serine 132.

Belongs to the DIM1 family. Component of the precatalytic spliceosome (spliceosome B complex). Component of the U5 snRNP complex. Component of the U4/U6-U5 tri-snRNP complex. The U4/U6-U5 tri-snRNP complex is a building block of the precatalytic spliceosome (spliceosome B complex). The U4/U6-U5 tri-snRNP complex is composed of the U4, U6 and U5 snRNAs and at least PRPF3, PRPF4, PRPF6, PRPF8, PRPF31, SNRNP200, TXNL4A, SNRNP40, SNRPB, SNRPD1, SNRPD2, SNRPD3, SNRPE, SNRPF, SNRPG, DDX23, CD2BP2, PPIH, SNU13, EFTUD2, SART1 and USP39, plus LSM2, LSM3, LSM4, LSM5, LSM6, LSM7 and LSM8. Directly interacts with CD2BP2. Interacts with HNRPF, HNRPH2, NEDD9 and PQBP1. Interacts with ERBB4. Post-translationally, the disulfide bond seen in structures determined by X-ray crystallography and NMR is not essential for protein folding and function.

Its subcellular location is the nucleus. In terms of biological role, plays a role in pre-mRNA splicing as component of the U5 snRNP and U4/U6-U5 tri-snRNP complexes that are involved in spliceosome assembly, and as component of the precatalytic spliceosome (spliceosome B complex). This chain is Thioredoxin-like protein 4A (TXNL4A), found in Homo sapiens (Human).